We begin with the raw amino-acid sequence, 747 residues long: 3',5'-cyclic-AMP phosphodiesterase 4D (747 aa).

Residues 1 to 28 (MERDTCDVLSRSKSASEETLHSCNEEED) form a disordered region. Over residues 14–24 (SASEETLHSCN) the composition is skewed to basic and acidic residues. 4 positions are modified to phosphoserine: S238, S240, S287, and S314. The disordered stretch occupies residues 282 to 302 (EVEIPSPTQKEKEKKKRPMSQ). The 330-residue stretch at 325–654 (VKTEQEDVLA…EWYQSTIPQS (330 aa)) folds into the PDEase domain. K326 is covalently cross-linked (Glycyl lysine isopeptide (Lys-Gly) (interchain with G-Cter in SUMO)). H401 functions as the Proton donor in the catalytic mechanism. 3',5'-cyclic AMP is bound at residue H401. H401 provides a ligand contact to AMP. Zn(2+)-binding residues include H405, H441, D442, and D559. The AMP site is built by D442, D559, N562, Q610, and F613. D442 is a binding site for Mg(2+). D442 is a Mn(2+) binding site. 3',5'-cyclic AMP-binding residues include Q610 and F613. The tract at residues 649–747 (STIPQSPSPA…CVPDDCCPDT (99 aa)) is disordered. The segment covering 701–712 (CSDSKTLCTQDS) has biased composition (polar residues). Residues 718-734 (PLDEQVEEEAVAEEESQ) are compositionally biased toward acidic residues.

Belongs to the cyclic nucleotide phosphodiesterase family. PDE4 subfamily. As to quaternary structure, homodimer for the long isoforms. Isoforms with truncated N-termini are monomeric. Binds ARRB2. Interacts with PDE4DIP. Identified in a complex composed of RYR1, PDE4D, PKA, FKBP1A and protein phosphatase 1 (PP1). Interacts (via N-terminal region) with SHANK2 (via proline-rich region); the interaction is increased in a PKA-dependent manner. Zn(2+) is required as a cofactor. It depends on Mg(2+) as a cofactor. The cofactor is Mn(2+). Post-translationally, sumoylation of long isoforms by PIAS4 augments their activation by PKA phosphorylation and represses their inhibition by ERK phosphorylation. As to expression, expressed in brain (at protein level). Isoform 7 is detected in heart, brain, lung, kidney and testis.

Its subcellular location is the cytoplasm. The protein resides in the membrane. The protein localises to the cytoskeleton. It is found in the microtubule organizing center. It localises to the centrosome. Its subcellular location is the apical cell membrane. It catalyses the reaction 3',5'-cyclic AMP + H2O = AMP + H(+). Its pathway is purine metabolism; 3',5'-cyclic AMP degradation; AMP from 3',5'-cyclic AMP: step 1/1. Inhibited by rolipram. Activated by phosphatidic acid. Hydrolyzes the second messenger cAMP, which is a key regulator of many important physiological processes. The sequence is that of 3',5'-cyclic-AMP phosphodiesterase 4D (Pde4d) from Mus musculus (Mouse).